A 417-amino-acid polypeptide reads, in one-letter code: Probable lysophospholipase BODYGUARD 4 (417 aa).

An N-terminal signal peptide occupies residues 1–49 (MSFPRKFGTAIHAALSFIVFFFLDLLDAILCVVYEFVDEILEENSTGCY). Residue cysteine 50 is the site of N-palmitoyl cysteine attachment. Residues 150-259 (VIFIHGFMGS…PPYFPSSVEG (110 aa)) enclose the AB hydrolase-1 domain. Histidine 154 is an active-site residue. Serine 225 functions as the Nucleophile in the catalytic mechanism. Catalysis depends on charge relay system residues aspartate 367 and histidine 395.

Expressed in epidermal cells.

It localises to the cell membrane. The protein localises to the secreted. The protein resides in the cell wall. Functionally, involved in cuticle development and morphogenesis. This chain is Probable lysophospholipase BODYGUARD 4, found in Arabidopsis thaliana (Mouse-ear cress).